A 210-amino-acid chain; its full sequence is Large ribosomal subunit protein uL4 (210 aa).

Residues 41-52 are compositionally biased toward polar residues; the sequence is QTNARQGTASTK. Residues 41–71 form a disordered region; it reads QTNARQGTASTKTRAEVRGGGRKPWRQKGTG. Over residues 60 to 71 the composition is skewed to basic residues; that stretch reads GGRKPWRQKGTG.

This sequence belongs to the universal ribosomal protein uL4 family. In terms of assembly, part of the 50S ribosomal subunit.

One of the primary rRNA binding proteins, this protein initially binds near the 5'-end of the 23S rRNA. It is important during the early stages of 50S assembly. It makes multiple contacts with different domains of the 23S rRNA in the assembled 50S subunit and ribosome. Functionally, forms part of the polypeptide exit tunnel. The chain is Large ribosomal subunit protein uL4 from Nostoc sp. (strain PCC 7120 / SAG 25.82 / UTEX 2576).